The chain runs to 365 residues: MIMKFFDREREINEILGILDETPDNIYFIYGPINSGKTTLMMEIINRLKDDKKYRIFYYNLRGVRISSYSDFFDIMFEIREDNKFKQMVKDADVLVEGIKFIEKTAKLFNESIILPSDLAKVILSKQKGFDVFRYLERVFREMNKKGLKPVIIIDELQRLKGLKSNGELIDDLFNFFVRLTKELHITHCFCLSSDSLFIEYVYDRAELRGRADYILVDDFDKETALKFMDFLSEDILGRKLSEDEKELIYSYVGGKPKDVYDVIIKLKLGKELKDILEFMLKEEIQKLKYFLEDVKEDDEELYNKIVDALKIFKENYEIEDIKIPKNIREFLVKKNILFLNPIEGTLKPQSFLVWNAIKKLLNGH.

Residue 31–38 (GPINSGKT) coordinates ATP.

The protein belongs to the archaeal ATPase family.

This is an uncharacterized protein from Methanocaldococcus jannaschii (strain ATCC 43067 / DSM 2661 / JAL-1 / JCM 10045 / NBRC 100440) (Methanococcus jannaschii).